Here is an 88-residue protein sequence, read N- to C-terminus: UPF0213 protein EF_2693 (88 aa).

The GIY-YIG domain occupies 5–82 (KSHYFYVLLC…KKLTRKQKEQ (78 aa)).

Belongs to the UPF0213 family.

The polypeptide is UPF0213 protein EF_2693 (Enterococcus faecalis (strain ATCC 700802 / V583)).